The chain runs to 78 residues: MNRTKLVLGAVILGSTLLAGCSSNAKIDQLSTDVQTLNAKVDQLSNDVTAIRSDVQAAKDDAARANQRLDNQAHSYRK.

Positions 1-20 (MNRTKLVLGAVILGSTLLAG) are cleaved as a signal peptide. Residue Cys-21 is the site of N-palmitoyl cysteine attachment. Cys-21 carries S-diacylglycerol cysteine lipidation. Residues 22-75 (SSNAKIDQLSTDVQTLNAKVDQLSNDVTAIRSDVQAAKDDAARANQRLDNQAHS) adopt a coiled-coil conformation. 2 consecutive repeats follow at residues 24 to 34 (NAKIDQLSTDV) and 38 to 48 (NAKVDQLSNDV). Residue Lys-78 is modified to N6-murein peptidoglycan lysine.

This sequence belongs to the Lpp family. As to quaternary structure, homotrimer.

It is found in the cell outer membrane. The protein localises to the secreted. The protein resides in the cell wall. Functionally, a highly abundant outer membrane lipoprotein that controls the distance between the inner and outer membranes. The only protein known to be covalently linked to the peptidoglycan network (PGN). Also non-covalently binds the PGN. The link between the cell outer membrane and PGN contributes to maintenance of the structural and functional integrity of the cell envelope, and maintains the correct distance between the PGN and the outer membrane. The protein is Major outer membrane lipoprotein Lpp of Erwinia amylovora (Fire blight bacteria).